A 425-amino-acid polypeptide reads, in one-letter code: Serine--tRNA ligase (425 aa).

Threonine 228–glutamate 230 provides a ligand contact to L-serine. Arginine 259–glutamate 261 contributes to the ATP binding site. Position 282 (glutamate 282) interacts with L-serine. ATP is bound at residue glutamate 346–serine 349. Serine 382 lines the L-serine pocket.

Belongs to the class-II aminoacyl-tRNA synthetase family. Type-1 seryl-tRNA synthetase subfamily. As to quaternary structure, homodimer. The tRNA molecule binds across the dimer.

It is found in the cytoplasm. The catalysed reaction is tRNA(Ser) + L-serine + ATP = L-seryl-tRNA(Ser) + AMP + diphosphate + H(+). It catalyses the reaction tRNA(Sec) + L-serine + ATP = L-seryl-tRNA(Sec) + AMP + diphosphate + H(+). It participates in aminoacyl-tRNA biosynthesis; selenocysteinyl-tRNA(Sec) biosynthesis; L-seryl-tRNA(Sec) from L-serine and tRNA(Sec): step 1/1. In terms of biological role, catalyzes the attachment of serine to tRNA(Ser). Is also able to aminoacylate tRNA(Sec) with serine, to form the misacylated tRNA L-seryl-tRNA(Sec), which will be further converted into selenocysteinyl-tRNA(Sec). The sequence is that of Serine--tRNA ligase from Rickettsia africae (strain ESF-5).